The primary structure comprises 292 residues: ATP synthase gamma chain (292 aa).

The protein belongs to the ATPase gamma chain family. In terms of assembly, F-type ATPases have 2 components, CF(1) - the catalytic core - and CF(0) - the membrane proton channel. CF(1) has five subunits: alpha(3), beta(3), gamma(1), delta(1), epsilon(1). CF(0) has three main subunits: a, b and c.

It is found in the cell inner membrane. Its function is as follows. Produces ATP from ADP in the presence of a proton gradient across the membrane. The gamma chain is believed to be important in regulating ATPase activity and the flow of protons through the CF(0) complex. This chain is ATP synthase gamma chain, found in Brucella abortus (strain S19).